The following is a 273-amino-acid chain: MTKLIIHLVSDSSVQTVKHAANSALAQFTSIKQKLYHWPMIRNLELLNEVLSKIESKHGIVLYTIADQELRKALTKFCYELKIPCISVIGKIIKEMSVFSGIEIEKEQNYNYKFDKTYFDTLNAIDYAIRHDDGQMINELSESDIILIGPSRTSKTPTSVFLAYNGLKAANIPYVYNCPFPDFIEKNIDQLVVGLVINPNRLIEIREARLNLLQINENKSYTDFNIVQRECIEVRKICNQRNWPVIDVSTRSIEETAALIMRIYYNRKNKYHK.

149–156 (GPSRTSKT) lines the ADP pocket.

It belongs to the pyruvate, phosphate/water dikinase regulatory protein family. PDRP subfamily.

The catalysed reaction is N(tele)-phospho-L-histidyl/L-threonyl-[pyruvate, phosphate dikinase] + ADP = N(tele)-phospho-L-histidyl/O-phospho-L-threonyl-[pyruvate, phosphate dikinase] + AMP + H(+). The enzyme catalyses N(tele)-phospho-L-histidyl/O-phospho-L-threonyl-[pyruvate, phosphate dikinase] + phosphate + H(+) = N(tele)-phospho-L-histidyl/L-threonyl-[pyruvate, phosphate dikinase] + diphosphate. Functionally, bifunctional serine/threonine kinase and phosphorylase involved in the regulation of the pyruvate, phosphate dikinase (PPDK) by catalyzing its phosphorylation/dephosphorylation. The protein is Putative pyruvate, phosphate dikinase regulatory protein of Rickettsia typhi (strain ATCC VR-144 / Wilmington).